The sequence spans 486 residues: Aspartyl/glutamyl-tRNA(Asn/Gln) amidotransferase subunit B (486 aa).

It belongs to the GatB/GatE family. GatB subfamily. As to quaternary structure, heterotrimer of A, B and C subunits.

The enzyme catalyses L-glutamyl-tRNA(Gln) + L-glutamine + ATP + H2O = L-glutaminyl-tRNA(Gln) + L-glutamate + ADP + phosphate + H(+). The catalysed reaction is L-aspartyl-tRNA(Asn) + L-glutamine + ATP + H2O = L-asparaginyl-tRNA(Asn) + L-glutamate + ADP + phosphate + 2 H(+). Its function is as follows. Allows the formation of correctly charged Asn-tRNA(Asn) or Gln-tRNA(Gln) through the transamidation of misacylated Asp-tRNA(Asn) or Glu-tRNA(Gln) in organisms which lack either or both of asparaginyl-tRNA or glutaminyl-tRNA synthetases. The reaction takes place in the presence of glutamine and ATP through an activated phospho-Asp-tRNA(Asn) or phospho-Glu-tRNA(Gln). The polypeptide is Aspartyl/glutamyl-tRNA(Asn/Gln) amidotransferase subunit B (Leptospira borgpetersenii serovar Hardjo-bovis (strain JB197)).